The primary structure comprises 127 residues: Stationary phase protein 3 (127 aa).

The next 2 membrane-spanning stretches (helical) occupy residues Leu29–Ile49 and Ala63–Leu83. Asn86 carries an N-linked (GlcNAc...) asparagine glycan.

It is found in the membrane. Functionally, required for survival during stationary phase. In Saccharomyces cerevisiae (strain ATCC 204508 / S288c) (Baker's yeast), this protein is Stationary phase protein 3 (SPG3).